The following is a 473-amino-acid chain: 3-isopropylmalate dehydratase large subunit (473 aa).

The tract at residues 289 to 319 (TVTWGTTPGQTAGITEPIPDPDDLPEEDRDT) is disordered. The segment covering 291-301 (TWGTTPGQTAG) has biased composition (polar residues). The span at 307–317 (PDPDDLPEEDR) shows a compositional bias: acidic residues. The [4Fe-4S] cluster site is built by C348, C408, and C411.

The protein belongs to the aconitase/IPM isomerase family. LeuC type 1 subfamily. As to quaternary structure, heterodimer of LeuC and LeuD. Requires [4Fe-4S] cluster as cofactor.

It catalyses the reaction (2R,3S)-3-isopropylmalate = (2S)-2-isopropylmalate. It functions in the pathway amino-acid biosynthesis; L-leucine biosynthesis; L-leucine from 3-methyl-2-oxobutanoate: step 2/4. Its function is as follows. Catalyzes the isomerization between 2-isopropylmalate and 3-isopropylmalate, via the formation of 2-isopropylmaleate. The protein is 3-isopropylmalate dehydratase large subunit of Halorubrum lacusprofundi (strain ATCC 49239 / DSM 5036 / JCM 8891 / ACAM 34).